An 829-amino-acid chain; its full sequence is Leucine--tRNA ligase (829 aa).

The short motif at 42–52 is the 'HIGH' region element; that stretch reads PYPSGRIHMGH. The 'KMSKS' region signature appears at 584-588; that stretch reads KMSKS. Lys587 provides a ligand contact to ATP.

The protein belongs to the class-I aminoacyl-tRNA synthetase family.

Its subcellular location is the cytoplasm. The enzyme catalyses tRNA(Leu) + L-leucine + ATP = L-leucyl-tRNA(Leu) + AMP + diphosphate. This chain is Leucine--tRNA ligase, found in Syntrophobacter fumaroxidans (strain DSM 10017 / MPOB).